Here is a 76-residue protein sequence, read N- to C-terminus: Putative defensin-like protein 184 (76 aa).

A signal peptide spans 1-21 (MKNSSILFVLIIVVFLISSSG). Disulfide bonds link C32-C76, C38-C58, C44-C70, and C48-C72.

It belongs to the DEFL family.

It localises to the secreted. The protein is Putative defensin-like protein 184 (LCR18) of Arabidopsis thaliana (Mouse-ear cress).